A 159-amino-acid polypeptide reads, in one-letter code: MNINIVTIGKLKEKYLKQGIEEYTKRLSAYAKIDIIELPDEKAPENLSDQDMKIIKDKEGDRILSKISPDAHVIALAIEGKMKTSEELADTIDKLATYGKSKVTFVIGGSLGLSDTVMKRADEKLSFSKMTFPHQLMRLILVEQIYRAFRINRGEPYHK.

S-adenosyl-L-methionine contacts are provided by residues Leu-76, Gly-108, and 127–132 (FSKMTF).

The protein belongs to the RNA methyltransferase RlmH family. Homodimer.

The protein resides in the cytoplasm. The enzyme catalyses pseudouridine(1915) in 23S rRNA + S-adenosyl-L-methionine = N(3)-methylpseudouridine(1915) in 23S rRNA + S-adenosyl-L-homocysteine + H(+). Its function is as follows. Specifically methylates the pseudouridine at position 1915 (m3Psi1915) in 23S rRNA. This is Ribosomal RNA large subunit methyltransferase H from Bacillus subtilis (strain 168).